The primary structure comprises 456 residues: Chordin-like protein 1 (456 aa).

A signal peptide spans 1–28 (MRRKWRSEDFHFVFFGVLCLLLIDRGKL). VWFC domains lie at 36 to 101 (TYCV…PRCP), 115 to 181 (KSCE…PVCR), and 262 to 327 (RVCV…KVCP). Asn-120 carries N-linked (GlcNAc...) asparagine glycosylation. The Cell attachment site motif lies at 181–183 (RGD). Asn-295 carries an N-linked (GlcNAc...) asparagine glycan.

As to expression, mainly expressed in the ventral retina.

The protein localises to the secreted. Functionally, seems to antagonize the function of BMP4 by binding to it and preventing its interaction with receptors. The protein is Chordin-like protein 1 (CHRDL1) of Gallus gallus (Chicken).